A 315-amino-acid chain; its full sequence is Cell division protein FtsZ (315 aa).

GTP-binding positions include 55–57 (GTG), E98, R102, and D146.

The protein belongs to the FtsZ family. In terms of assembly, homodimer. Polymerizes to form a dynamic ring structure in a strictly GTP-dependent manner. Interacts directly with several other division proteins.

The protein resides in the cytoplasm. Its function is as follows. Essential cell division protein that forms a contractile ring structure (Z ring) at the future cell division site. The regulation of the ring assembly controls the timing and the location of cell division. One of the functions of the FtsZ ring is to recruit other cell division proteins to the septum to produce a new cell wall between the dividing cells. Binds GTP and shows GTPase activity. The chain is Cell division protein FtsZ from Wolbachia pipientis.